The following is a 207-amino-acid chain: Large ribosomal subunit protein uL4 (207 aa).

A disordered region spans residues 48–70 (KAQKTRSEVSGGGAKPWRQKGTG).

It belongs to the universal ribosomal protein uL4 family. As to quaternary structure, part of the 50S ribosomal subunit.

One of the primary rRNA binding proteins, this protein initially binds near the 5'-end of the 23S rRNA. It is important during the early stages of 50S assembly. It makes multiple contacts with different domains of the 23S rRNA in the assembled 50S subunit and ribosome. Its function is as follows. Forms part of the polypeptide exit tunnel. This chain is Large ribosomal subunit protein uL4, found in Francisella philomiragia subsp. philomiragia (strain ATCC 25017 / CCUG 19701 / FSC 153 / O#319-036).